The chain runs to 340 residues: DNA-directed RNA polymerase subunit alpha (340 aa).

An alpha N-terminal domain (alpha-NTD) region spans residues 1–238 (MVDPIVTKNW…EQLSIFINFD (238 aa)). Residues 255–340 (LNENLFRSVD…AAPQGGAPKV (86 aa)) form an alpha C-terminal domain (alpha-CTD) region.

Belongs to the RNA polymerase alpha chain family. In terms of assembly, homodimer. The RNAP catalytic core consists of 2 alpha, 1 beta, 1 beta' and 1 omega subunit. When a sigma factor is associated with the core the holoenzyme is formed, which can initiate transcription.

The enzyme catalyses RNA(n) + a ribonucleoside 5'-triphosphate = RNA(n+1) + diphosphate. DNA-dependent RNA polymerase catalyzes the transcription of DNA into RNA using the four ribonucleoside triphosphates as substrates. The protein is DNA-directed RNA polymerase subunit alpha of Anaeromyxobacter dehalogenans (strain 2CP-1 / ATCC BAA-258).